Consider the following 289-residue polypeptide: Glucosamine-6-phosphate deaminase 1 (289 aa).

Position 64 is an N6-acetyllysine (lysine 64). Catalysis depends on aspartate 72, which acts as the Proton acceptor; for enolization step. Aspartate 141 acts as the For ring-opening step in catalysis. Histidine 143 acts as the Proton acceptor; for ring-opening step in catalysis. The active-site For ring-opening step is the glutamate 148. Phosphothreonine is present on threonine 161.

It belongs to the glucosamine/galactosamine-6-phosphate isomerase family. As to quaternary structure, homohexamer. At the equatorial segment of the sperm head.

It is found in the cytoplasm. The enzyme catalyses alpha-D-glucosamine 6-phosphate + H2O = beta-D-fructose 6-phosphate + NH4(+). The protein operates within nucleotide-sugar biosynthesis; UDP-N-acetyl-alpha-D-glucosamine biosynthesis; alpha-D-glucosamine 6-phosphate from D-fructose 6-phosphate: step 1/1. Allosterically activated by N-acetylglucosamine-6-phosphate (GlcNAc6P). Functionally, catalyzes the reversible conversion of alpha-D-glucosamine 6-phosphate (GlcN-6P) into beta-D-fructose 6-phosphate (Fru-6P) and ammonium ion, a regulatory reaction step in de novo uridine diphosphate-N-acetyl-alpha-D-glucosamine (UDP-GlcNAc) biosynthesis via hexosamine pathway. Deamination is coupled to aldo-keto isomerization mediating the metabolic flux from UDP-GlcNAc toward Fru-6P. At high ammonium level can drive amination and isomerization of Fru-6P toward hexosamines and UDP-GlcNAc synthesis. Has a role in fine tuning the metabolic fluctuations of cytosolic UDP-GlcNAc and their effects on hyaluronan synthesis that occur during tissue remodeling. Seems to trigger calcium oscillations in mammalian eggs. These oscillations serve as the essential trigger for egg activation and early development of the embryo. The polypeptide is Glucosamine-6-phosphate deaminase 1 (Mesocricetus auratus (Golden hamster)).